The primary structure comprises 367 residues: Tubulin-like protein CetZ (367 aa).

Residues 11 to 15 (QCGNR), S111, 115 to 117 (GTG), E148, N176, and N194 contribute to the GTP site.

The protein belongs to the CetZ family.

The protein localises to the cytoplasm. Its function is as follows. Involved in cell shape control. The polypeptide is Tubulin-like protein CetZ (Methanothrix thermoacetophila (strain DSM 6194 / JCM 14653 / NBRC 101360 / PT) (Methanosaeta thermophila)).